The sequence spans 211 residues: tRNA (guanine-N(7)-)-methyltransferase (211 aa).

Residues glutamate 43, glutamate 68, asparagine 95, and aspartate 117 each contribute to the S-adenosyl-L-methionine site. Aspartate 117 is a catalytic residue. Substrate-binding positions include lysine 121, aspartate 153, and 190–193 (TEYE).

This sequence belongs to the class I-like SAM-binding methyltransferase superfamily. TrmB family.

The catalysed reaction is guanosine(46) in tRNA + S-adenosyl-L-methionine = N(7)-methylguanosine(46) in tRNA + S-adenosyl-L-homocysteine. It functions in the pathway tRNA modification; N(7)-methylguanine-tRNA biosynthesis. Its function is as follows. Catalyzes the formation of N(7)-methylguanine at position 46 (m7G46) in tRNA. The protein is tRNA (guanine-N(7)-)-methyltransferase of Alkaliphilus oremlandii (strain OhILAs) (Clostridium oremlandii (strain OhILAs)).